Here is an 888-residue protein sequence, read N- to C-terminus: Phosphoenolpyruvate carboxylase (888 aa).

Active-site residues include H144 and K553.

It belongs to the PEPCase type 1 family. Mg(2+) serves as cofactor.

It carries out the reaction oxaloacetate + phosphate = phosphoenolpyruvate + hydrogencarbonate. Forms oxaloacetate, a four-carbon dicarboxylic acid source for the tricarboxylic acid cycle. In Alcanivorax borkumensis (strain ATCC 700651 / DSM 11573 / NCIMB 13689 / SK2), this protein is Phosphoenolpyruvate carboxylase.